The chain runs to 263 residues: Endolytic peptidoglycan transglycosylase RlpA (263 aa).

Residues 1–16 (MNRIYLYLLIVLILAG) form the signal peptide. Cys17 carries N-palmitoyl cysteine lipidation. A lipid anchor (S-diacylglycerol cysteine) is attached at Cys17. The region spanning 182–257 (KNNALEYVIQ…AGYDSAFIKT (76 aa)) is the SPOR domain.

The protein belongs to the RlpA family.

The protein localises to the cell membrane. Its function is as follows. Lytic transglycosylase with a strong preference for naked glycan strands that lack stem peptides. The polypeptide is Endolytic peptidoglycan transglycosylase RlpA (Vibrio cholerae serotype O1 (strain ATCC 39315 / El Tor Inaba N16961)).